A 272-amino-acid polypeptide reads, in one-letter code: Pyrroline-5-carboxylate reductase (272 aa).

Belongs to the pyrroline-5-carboxylate reductase family.

It is found in the cytoplasm. It carries out the reaction L-proline + NADP(+) = (S)-1-pyrroline-5-carboxylate + NADPH + 2 H(+). The catalysed reaction is L-proline + NAD(+) = (S)-1-pyrroline-5-carboxylate + NADH + 2 H(+). The protein operates within amino-acid biosynthesis; L-proline biosynthesis; L-proline from L-glutamate 5-semialdehyde: step 1/1. Functionally, catalyzes the reduction of 1-pyrroline-5-carboxylate (PCA) to L-proline. This chain is Pyrroline-5-carboxylate reductase, found in Vibrio alginolyticus.